Consider the following 127-residue polypeptide: MKRIFLSAKLHKVTTTAVELNYEGSCEIDGVLLDAAGIGAFEQIQIYNINNGNRFTTYTILGKDNSGIISVNGAAARKVNVGDVLIIAAYALYSEEELEGYAPRLCYVNNKNILTKISTGSKKSSLY.

The active-site Schiff-base intermediate with substrate; via pyruvic acid is serine 25. The residue at position 25 (serine 25) is a Pyruvic acid (Ser). Substrate is bound at residue threonine 57. Residue tyrosine 58 is the Proton donor of the active site. 73 to 75 (GAA) is a substrate binding site.

This sequence belongs to the PanD family. In terms of assembly, heterooctamer of four alpha and four beta subunits. Pyruvate serves as cofactor. Is synthesized initially as an inactive proenzyme, which is activated by self-cleavage at a specific serine bond to produce a beta-subunit with a hydroxyl group at its C-terminus and an alpha-subunit with a pyruvoyl group at its N-terminus.

It is found in the cytoplasm. The catalysed reaction is L-aspartate + H(+) = beta-alanine + CO2. It functions in the pathway cofactor biosynthesis; (R)-pantothenate biosynthesis; beta-alanine from L-aspartate: step 1/1. Functionally, catalyzes the pyruvoyl-dependent decarboxylation of aspartate to produce beta-alanine. The chain is Aspartate 1-decarboxylase from Vesicomyosocius okutanii subsp. Calyptogena okutanii (strain HA).